Consider the following 335-residue polypeptide: Aspartate--ammonia ligase (335 aa).

It belongs to the class-II aminoacyl-tRNA synthetase family. AsnA subfamily.

It localises to the cytoplasm. The enzyme catalyses L-aspartate + NH4(+) + ATP = L-asparagine + AMP + diphosphate + H(+). It participates in amino-acid biosynthesis; L-asparagine biosynthesis; L-asparagine from L-aspartate (ammonia route): step 1/1. The chain is Aspartate--ammonia ligase from Levilactobacillus brevis (strain ATCC 367 / BCRC 12310 / CIP 105137 / JCM 1170 / LMG 11437 / NCIMB 947 / NCTC 947) (Lactobacillus brevis).